A 1278-amino-acid chain; its full sequence is SMC5-SMC6 complex localization factor protein 2 (1278 aa).

Disordered regions lie at residues 1 to 235 (MTRR…LGAR), 248 to 337 (EQKK…KRTE), 443 to 491 (RINS…FIRH), and 509 to 582 (EPED…KETK). Residues 39–50 (KRTESPGDRKQS) are compositionally biased toward basic and acidic residues. Residues 94-103 (SSPKKLKPKR) are compositionally biased toward basic residues. Basic and acidic residues-rich tracts occupy residues 118–133 (GGKEHHKDRGVHESRR), 156–174 (LPKEIKAQKKKHQSPERRK), 180–199 (ESNREKNDRDRGKNSEDSRK), and 248–258 (EQKKLRKEQME). Composition is skewed to polar residues over residues 259-277 (QRINSENSFSEASNLSLKS) and 318-329 (SDSWELSGSKQN). 2 stretches are compositionally biased toward basic and acidic residues: residues 449–463 (KEQRNSVDSDLKSTK) and 469–489 (KARESFLEKRPDTSHQREKFI). Polar residues predominate over residues 519 to 540 (ADSAPSNAGHHSSRNSDQVHSA). S591 bears the Phosphoserine mark. Disordered stretches follow at residues 598 to 724 (PLNA…EEEE), 739 to 764 (RTPTTSGKPPAVSKGLRSQSSDMKEY), and 798 to 820 (IRQGRGIKSPLRTGDQDSTDDGD). A compositionally biased stretch (basic and acidic residues) spans 609–630 (PKKDKERSSSKERSGHSTESSK). 3 stretches are compositionally biased toward low complexity: residues 643–654 (SNESSGKNSGGS), 666–675 (PPAALEVVPS), and 688–697 (SGNSNAGSNA). Residues 707–724 (DSDEESLGYTLESDEEEE) show a composition bias toward acidic residues. S708, S712, and S719 each carry phosphoserine. The interaction with SIMC1 stretch occupies residues 740–1278 (TPTTSGKPPA…QLHDFWVPDS (539 aa)). An NSE6-like domain region spans residues 769–1271 (TYTNTLERLV…NCRPTQGQLH (503 aa)). The required for interaction with SLF1 and RAD18 stretch occupies residues 807 to 1278 (PLRTGDQDST…QLHDFWVPDS (472 aa)).

The protein belongs to the FAM178 family. As to quaternary structure, forms a heterodimer with SIMC1. Interacts with SLF1 (via N-terminus); this interaction links RAD18 to the SMC5-SMC6 complex. Interacts with RAD18; this interaction is increased in a SLF1-dependent manner. Interacts with SMC5 and SMC6.

It is found in the nucleus. The protein resides in the PML body. In terms of biological role, plays a role in the DNA damage response (DDR) pathway by regulating postreplication repair of UV-damaged DNA and genomic stability maintenance. The SLF1-SLF2 complex acts to link RAD18 with the SMC5-SMC6 complex at replication-coupled interstrand cross-links (ICL) and DNA double-strand breaks (DSBs) sites on chromatin during DNA repair in response to stalled replication forks. Promotes the recruitment of the SMC5-SMC6 complex to DNA lesions. May play a role in SMC5-SMC6 complex recruitment for viral restriction. Forms a complex with SIMC1 and this complex is required to recruit SMC5-SMC6 complex to PML nuclear bodies and sites of viral replication. This Mus musculus (Mouse) protein is SMC5-SMC6 complex localization factor protein 2.